A 426-amino-acid polypeptide reads, in one-letter code: Serine hydroxymethyltransferase (426 aa).

(6S)-5,6,7,8-tetrahydrofolate is bound by residues L113 and 117 to 119 (GHL). The residue at position 222 (K222) is an N6-(pyridoxal phosphate)lysine. 363 to 365 (SPF) provides a ligand contact to (6S)-5,6,7,8-tetrahydrofolate.

The protein belongs to the SHMT family. Homodimer. It depends on pyridoxal 5'-phosphate as a cofactor.

It is found in the cytoplasm. The catalysed reaction is (6R)-5,10-methylene-5,6,7,8-tetrahydrofolate + glycine + H2O = (6S)-5,6,7,8-tetrahydrofolate + L-serine. It participates in one-carbon metabolism; tetrahydrofolate interconversion. It functions in the pathway amino-acid biosynthesis; glycine biosynthesis; glycine from L-serine: step 1/1. Its function is as follows. Catalyzes the reversible interconversion of serine and glycine with tetrahydrofolate (THF) serving as the one-carbon carrier. This reaction serves as the major source of one-carbon groups required for the biosynthesis of purines, thymidylate, methionine, and other important biomolecules. Also exhibits THF-independent aldolase activity toward beta-hydroxyamino acids, producing glycine and aldehydes, via a retro-aldol mechanism. The protein is Serine hydroxymethyltransferase of Azobacteroides pseudotrichonymphae genomovar. CFP2.